The following is a 1108-amino-acid chain: Serine/threonine-protein kinase AKL1 (1108 aa).

At serine 2 the chain carries N-acetylserine. The residue at position 10 (serine 10) is a Phosphoserine. The 285-residue stretch at 35-319 folds into the Protein kinase domain; that stretch reads VEVVNYLAEG…IYQVLYHLCE (285 aa). Residues 41–49 and lysine 70 each bind ATP; that span reads LAEGGFAQI. Aspartate 181 serves as the catalytic Proton acceptor. The tract at residues 405-466 is disordered; that stretch reads IPSQNVGQEL…QSPGIEDKSI (62 aa). Serine 407 is subject to Phosphoserine. Basic and acidic residues predominate over residues 419–435; it reads ESQSDQRKSTLSEDKSS. Residues 436-449 show a composition bias toward low complexity; the sequence is RTTSNANSSGTANN. The residue at position 471 (threonine 471) is a Phosphothreonine. Residues 493 to 513 are compositionally biased toward polar residues; the sequence is KQSSDPTISEQSPRLNTQSLP. The disordered stretch occupies residues 493 to 534; sequence KQSSDPTISEQSPRLNTQSLPQRQKSTSSYSSGGRSMKSTSY. Serine 504 carries the phosphoserine modification. Over residues 514-534 the composition is skewed to low complexity; sequence QRQKSTSSYSSGGRSMKSTSY. A phosphoserine mark is found at serine 541 and serine 574. Positions 590–629 are enriched in low complexity; that stretch reads QQQGQRYQQAQNQTGTQGNTFPDESQYQSRVEQQQQQQDQ. Disordered stretches follow at residues 590 to 663 and 765 to 791; these read QQQG…GDSG and EDMR…HSSS. Residues 781-791 show a composition bias toward polar residues; it reads NSANEPMHSSS. The residue at position 801 (serine 801) is a Phosphoserine. The segment at 807-838 is disordered; it reads AGKQSFQDTNEPQTGGIEDAGGSGTIKGSNNN. The segment covering 810-819 has biased composition (polar residues); it reads QSFQDTNEPQ. Residue serine 846 is modified to Phosphoserine. The interval 858–1108 is disordered; sequence GAAVSSFSSS…SFFSVFRSEK (251 aa). Low complexity predominate over residues 859–872; sequence AAVSSFSSSSSSAS. Residues 910-934 are compositionally biased toward basic and acidic residues; it reads DDARRGKTAERRPLHNERGHKDQAR. Positions 935–976 are enriched in polar residues; sequence SSDASKSNQFKSKDFSSVSTRQPRQSLDLNFQEVNLSSPTLT. Residues serine 953 and serine 960 each carry the phosphoserine modification. The span at 1006 to 1048 shows a compositional bias: basic and acidic residues; the sequence is ENKRHSTGHELSTRSNGKHETHRTGSKQRHDLERYRHSKDKDS. Residues lysine 1008 and lysine 1046 each participate in a glycyl lysine isopeptide (Lys-Gly) (interchain with G-Cter in ubiquitin) cross-link. Phosphoserine is present on serine 1048. Low complexity predominate over residues 1049-1060; that stretch reads NSSITISTSTPS. A compositionally biased stretch (basic and acidic residues) spans 1071-1082; that stretch reads QSLDLERVRREA. Serine 1072 is subject to Phosphoserine.

It belongs to the protein kinase superfamily. Ser/Thr protein kinase family.

It catalyses the reaction L-seryl-[protein] + ATP = O-phospho-L-seryl-[protein] + ADP + H(+). The catalysed reaction is L-threonyl-[protein] + ATP = O-phospho-L-threonyl-[protein] + ADP + H(+). In terms of biological role, phosphorylates SCD5. The sequence is that of Serine/threonine-protein kinase AKL1 (AKL1) from Saccharomyces cerevisiae (strain ATCC 204508 / S288c) (Baker's yeast).